Reading from the N-terminus, the 1008-residue chain is Phytosulfokine receptor 1 (1008 aa).

Residues 1–25 form the signal peptide; it reads MRVHRFCVIVIFLTELLCFFYSSES. Asn55, Asn64, and Asn73 each carry an N-linked (GlcNAc...) asparagine glycan. LRR repeat units follow at residues 75-98, 99-123, 124-148, 150-170, 172-194, 195-219, 221-243, 244-266, 291-315, 316-339, 341-362, and 363-387; these read TGRV…SLGK, LDEI…IFNL, KNLQ…NLPA, QSFD…ICHN, TQIR…GFGK, CVLL…LFHL, RLNL…IRNL, SSLV…VFDE, SPSL…CTAM, IALN…LPDC, RLKN…SFKN, and FESL…GILQ. A glycan (N-linked (GlcNAc...) asparagine) is linked at Asn106. 3 N-linked (GlcNAc...) asparagine glycosylation sites follow: Asn160, Asn170, and Asn187. A glycan (N-linked (GlcNAc...) asparagine) is linked at Asn242. Arg300 provides a ligand contact to phytosulfokine. N-linked (GlcNAc...) asparagine glycosylation is found at Asn301 and Asn311. Phytosulfokine contacts are provided by Asn346, Ser370, and Ser372. 3 N-linked (GlcNAc...) asparagine glycosylation sites follow: Asn373, Asn378, and Asn391. 4 LRR repeats span residues 392-414, 415-438, 439-464, and 466-486; these read LTTL…SLHF, EKLK…LSSS, NELQ…DFKA, and FYLD…LTKL. Residues Thr398, Asn424, and Asp445 each coordinate phytosulfokine. Asn472 and Asn493 each carry an N-linked (GlcNAc...) asparagine glycan. Lys508 is a phytosulfokine binding site. N-linked (GlcNAc...) asparagine glycosylation is found at Asn510 and Asn534. LRR repeat units lie at residues 521–545, 546–570, 571–594, and 596–619; these read IFGF…EFGN, LKKL…LSGM, TSLE…LQQL, and FLSK…QFQT. N-linked (GlcNAc...) asparagine glycosylation is found at Asn606 and Asn622. Residues 660–680 form a helical membrane-spanning segment; the sequence is MAIGIAFGSVFLLTLLSLIVL. Residue Thr731 is modified to Phosphothreonine. The region spanning 734–1005 is the Protein kinase domain; the sequence is FDQANIIGCG…PTTQQLVSWL (272 aa). ATP is bound by residues 740 to 748 and Lys762; that span reads IGCGGFGMV. Tyr807 and Tyr847 each carry phosphotyrosine. Asp860 acts as the Proton acceptor in catalysis. At Tyr902 the chain carries Phosphotyrosine.

The protein belongs to the protein kinase superfamily. Ser/Thr protein kinase family. In terms of assembly, homo- and heterodimers with PSY1R. Heterodimers with the somatic embryogenesis receptor-like kinases (SERKs). PSK is not directly involved in PSKR-SERK interaction but stabilizes PSKR island domain for recruitment of a SERK. Part of a functional complex containing PSKR1, BAK1, CNGC17, and AHA. Interacts with AHA1, AHA2, and BAK1, but not with CNGC17 or BRI1. Requires Mg(2+) as cofactor. Mn(2+) serves as cofactor. In terms of tissue distribution, weakly expressed in roots, leaves, stems and flowers. Expressed in the primary and lateral roots, including root primordia and root tips, but not in the hypocotyl.

The protein resides in the cell membrane. It carries out the reaction L-seryl-[protein] + ATP = O-phospho-L-seryl-[protein] + ADP + H(+). The catalysed reaction is L-threonyl-[protein] + ATP = O-phospho-L-threonyl-[protein] + ADP + H(+). It catalyses the reaction GTP = 3',5'-cyclic GMP + diphosphate. Its activity is regulated as follows. cGMP suppresses kinase activity. In terms of biological role, phytosulfokine receptor with both a serine/threonine-protein kinase activity and a guanylate cyclase activity. Regulates, in response to phytosulfokine binding, a signaling cascade involved in plant cell differentiation, organogenesis, somatic embryogenesis, cellular proliferation and plant growth. Involved in plant immunity, with antagonistic effects on bacterial and fungal resistances. Not involved in PSY perception. CNGC17 and AHAs form a functional cation-translocating unit that is activated by PSKR1/BAK1 and possibly other BAK1/RLK complexes. The protein is Phytosulfokine receptor 1 of Arabidopsis thaliana (Mouse-ear cress).